The sequence spans 311 residues: Immune-associated nucleotide-binding protein 7 (311 aa).

The AIG1-type G domain maps to 14–222; it reads KQAENIVLVG…YTDDTYHMIK (209 aa). A G1 region spans residues 23–30; the sequence is GRTGNGKS. GTP is bound by residues 23-31 and serine 44; that span reads GRTGNGKSA. The interval 50–54 is G2; the sequence is GVTMK. A G3 region spans residues 72–75; the sequence is DTPG. The tract at residues 142–145 is G4; that stretch reads TGGD. The interval 181–183 is G5; it reads DNK. Asparagine 182 contacts GTP. A coiled-coil region spans residues 218–295; that stretch reads YHMIKEESEK…TQENNELNLA (78 aa).

It belongs to the TRAFAC class TrmE-Era-EngA-EngB-Septin-like GTPase superfamily. AIG1/Toc34/Toc159-like paraseptin GTPase family. IAN subfamily. As to expression, ubiquitous.

The sequence is that of Immune-associated nucleotide-binding protein 7 from Arabidopsis thaliana (Mouse-ear cress).